Reading from the N-terminus, the 438-residue chain is V-type ATP synthase beta chain (438 aa).

It belongs to the ATPase alpha/beta chains family.

Its function is as follows. Produces ATP from ADP in the presence of a proton gradient across the membrane. The V-type beta chain is a regulatory subunit. The sequence is that of V-type ATP synthase beta chain (atpB) from Chlamydia trachomatis serovar D (strain ATCC VR-885 / DSM 19411 / UW-3/Cx).